The sequence spans 159 residues: Phosphopantetheine adenylyltransferase (159 aa).

T10 lines the substrate pocket. ATP contacts are provided by residues 10–11 and H18; that span reads TF. 3 residues coordinate substrate: K42, M74, and R88. Residues 89 to 91, E99, and 124 to 130 contribute to the ATP site; these read GLR and WSFISSS.

It belongs to the bacterial CoaD family. Homohexamer. It depends on Mg(2+) as a cofactor.

It localises to the cytoplasm. The catalysed reaction is (R)-4'-phosphopantetheine + ATP + H(+) = 3'-dephospho-CoA + diphosphate. It participates in cofactor biosynthesis; coenzyme A biosynthesis; CoA from (R)-pantothenate: step 4/5. Its function is as follows. Reversibly transfers an adenylyl group from ATP to 4'-phosphopantetheine, yielding dephospho-CoA (dPCoA) and pyrophosphate. The chain is Phosphopantetheine adenylyltransferase from Salmonella typhimurium (strain LT2 / SGSC1412 / ATCC 700720).